The chain runs to 66 residues: Jindongenin-1a (66 aa).

A signal peptide spans 1–22; that stretch reads MFTLKKPLLLLFFLGTVSLSLC. Residues 23-40 constitute a propeptide that is removed on maturation; it reads EQERAADDDEGEVIEEEV. Cys-60 and Cys-66 are oxidised to a cystine.

As to expression, expressed by the skin glands.

It localises to the secreted. Displays broad-spectrum antibacterial activity against a range of Gram-positive and Gram-negative bacteria. Also displays antifungal activity against C.albicans ATCC 2002. Has low hemolytic activity, low cytotoxicity and low antioxidant activity. The polypeptide is Jindongenin-1a (Amolops jingdongensis (Chinese torrent frog)).